The primary structure comprises 238 residues: NADH-quinone oxidoreductase subunit C (238 aa).

A compositionally biased stretch (polar residues) spans 1–11 (MSTSNGSANGT). Positions 1–20 (MSTSNGSANGTNGVGLPRGD) are disordered.

The protein belongs to the complex I 30 kDa subunit family. In terms of assembly, NDH-1 is composed of 14 different subunits. Subunits NuoB, C, D, E, F, and G constitute the peripheral sector of the complex.

It is found in the cell membrane. The catalysed reaction is a quinone + NADH + 5 H(+)(in) = a quinol + NAD(+) + 4 H(+)(out). Its function is as follows. NDH-1 shuttles electrons from NADH, via FMN and iron-sulfur (Fe-S) centers, to quinones in the respiratory chain. The immediate electron acceptor for the enzyme in this species is believed to be a menaquinone. Couples the redox reaction to proton translocation (for every two electrons transferred, four hydrogen ions are translocated across the cytoplasmic membrane), and thus conserves the redox energy in a proton gradient. The chain is NADH-quinone oxidoreductase subunit C from Mycolicibacterium smegmatis (strain ATCC 700084 / mc(2)155) (Mycobacterium smegmatis).